The primary structure comprises 208 residues: MNSLFTSAFSPLAVSLGLLLVMTSAFPTPGPLGEDFKNDTTPSRLLLTTPEKTEALIKHIVDKISAIRKEICEKNDECENSKETLAENKLKLPKMEEKDGCFQSGFNQAICLIKTTAGLLEYQIYLDFLQNEFEGNQETVMELQSSIRTLIQILKEKIAGLITTPATNTDMLEKMQSSNEWVKNAKVIIILRSLENFLQFSLRAIRMK.

The first 29 residues, 1-29 (MNSLFTSAFSPLAVSLGLLLVMTSAFPTP), serve as a signal peptide directing secretion. The N-linked (GlcNAc...) asparagine glycan is linked to Asn38. A disulfide bridge connects residues Cys72 and Cys78. Ser81 is subject to Phosphoserine. Cysteines 101 and 111 form a disulfide.

This sequence belongs to the IL-6 superfamily. As to quaternary structure, component of a hexamer of two molecules each of IL6, IL6R and IL6ST; first binds to IL6R to associate with the signaling subunit IL6ST. Interacts with IL6R (via the N-terminal ectodomain); this interaction may be affected by IL6R-binding with SORL1, hence decreasing IL6 cis signaling. Interacts with SORL1 (via the N-terminal ectodomain); this interaction leads to IL6 internalization and lysosomal degradation. May form a trimeric complex with the soluble SORL1 ectodomain and soluble IL6R receptor; this interaction might stabilize circulating IL6, hence promoting IL6 trans signaling.

It is found in the secreted. In terms of biological role, cytokine with a wide variety of biological functions in immunity, tissue regeneration, and metabolism. Binds to IL6R, then the complex associates to the signaling subunit IL6ST/gp130 to trigger the intracellular IL6-signaling pathway. The interaction with the membrane-bound IL6R and IL6ST stimulates 'classic signaling', whereas the binding of IL6 and soluble IL6R to IL6ST stimulates 'trans-signaling'. Alternatively, 'cluster signaling' occurs when membrane-bound IL6:IL6R complexes on transmitter cells activate IL6ST receptors on neighboring receiver cells. Functionally, IL6 is a potent inducer of the acute phase response. Rapid production of IL6 contributes to host defense during infection and tissue injury, but excessive IL6 synthesis is involved in disease pathology. In the innate immune response, is synthesized by myeloid cells, such as macrophages and dendritic cells, upon recognition of pathogens through toll-like receptors (TLRs) at the site of infection or tissue injury. In the adaptive immune response, is required for the differentiation of B cells into immunoglobulin-secreting cells. Plays a major role in the differentiation of CD4(+) T cell subsets. Essential factor for the development of T follicular helper (Tfh) cells that are required for the induction of germinal-center formation. Required to drive naive CD4(+) T cells to the Th17 lineage. Also required for proliferation of myeloma cells and the survival of plasmablast cells. Acts as an essential factor in bone homeostasis and on vessels directly or indirectly by induction of VEGF, resulting in increased angiogenesis activity and vascular permeability. Induces, through 'trans-signaling' and synergistically with IL1B and TNF, the production of VEGF. Involved in metabolic controls, is discharged into the bloodstream after muscle contraction increasing lipolysis and improving insulin resistance. 'Trans-signaling' in central nervous system also regulates energy and glucose homeostasis. Mediates, through GLP-1, crosstalk between insulin-sensitive tissues, intestinal L cells and pancreatic islets to adapt to changes in insulin demand. Also acts as a myokine. Plays a protective role during liver injury, being required for maintenance of tissue regeneration. Also has a pivotal role in iron metabolism by regulating HAMP/hepcidin expression upon inflammation or bacterial infection. Through activation of IL6ST-YAP-NOTCH pathway, induces inflammation-induced epithelial regeneration. The polypeptide is Interleukin-6 (IL6) (Capra hircus (Goat)).